The chain runs to 264 residues: MRQYLQLLEDILENGVEKEDRTGVGTLSVFGRQLRFNLQDGFPLVTTKKLHIRSIIYELLWFLKGDTNVRYLQENGVTIWDEWADENGDLGPVYGAQWRSWKGADGKTVDQIASVVEEIKRNPNSRRLLVNAWNVAELDKMKLPPCHYAFQFYVANGRLSCMWQQRSVDTFLGLPFNIASYALLTHMIAEQCGLDVGELIFTGGDVHLYKNHIEQAKLQLTREPRPLPKLVLKRKPSSIFDYEYDDFEIVGYDPHPTIKAPVAV.

Arg21 is a binding site for dUMP. His51 provides a ligand contact to (6R)-5,10-methylene-5,6,7,8-tetrahydrofolate. 126–127 (RR) provides a ligand contact to dUMP. The active-site Nucleophile is the Cys146. DUMP-binding positions include 166-169 (RSVD), Asn177, and 207-209 (HLY). Position 169 (Asp169) interacts with (6R)-5,10-methylene-5,6,7,8-tetrahydrofolate. Ala263 serves as a coordination point for (6R)-5,10-methylene-5,6,7,8-tetrahydrofolate.

The protein belongs to the thymidylate synthase family. Bacterial-type ThyA subfamily. As to quaternary structure, homodimer.

The protein localises to the cytoplasm. It carries out the reaction dUMP + (6R)-5,10-methylene-5,6,7,8-tetrahydrofolate = 7,8-dihydrofolate + dTMP. It participates in pyrimidine metabolism; dTTP biosynthesis. In terms of biological role, catalyzes the reductive methylation of 2'-deoxyuridine-5'-monophosphate (dUMP) to 2'-deoxythymidine-5'-monophosphate (dTMP) while utilizing 5,10-methylenetetrahydrofolate (mTHF) as the methyl donor and reductant in the reaction, yielding dihydrofolate (DHF) as a by-product. This enzymatic reaction provides an intracellular de novo source of dTMP, an essential precursor for DNA biosynthesis. This chain is Thymidylate synthase, found in Geobacillus thermodenitrificans (strain NG80-2).